Here is a 63-residue protein sequence, read N- to C-terminus: Translational regulator CsrA (63 aa).

The protein belongs to the CsrA/RsmA family. As to quaternary structure, homodimer; the beta-strands of each monomer intercalate to form a hydrophobic core, while the alpha-helices form wings that extend away from the core.

It is found in the cytoplasm. Its function is as follows. A key translational regulator that binds mRNA to regulate translation initiation and/or mRNA stability. Mediates global changes in gene expression, shifting from rapid growth to stress survival by linking envelope stress, the stringent response and the catabolite repression systems. Usually binds in the 5'-UTR; binding at or near the Shine-Dalgarno sequence prevents ribosome-binding, repressing translation, binding elsewhere in the 5'-UTR can activate translation and/or stabilize the mRNA. Its function is antagonized by small RNA(s). This is Translational regulator CsrA from Haemophilus influenzae (strain 86-028NP).